The sequence spans 185 residues: Heavy metal-associated isoprenylated plant protein 11 (185 aa).

One can recognise an HMA domain in the interval 39-106 (QQNTNVVFKL…ICKHVAIIAA (68 aa)). Residues 109–158 (IREPEQNRNPVTRREPNREPEQNRSRVTRREPSREPEPNRAPLARRESRP) are compositionally biased toward basic and acidic residues. The disordered stretch occupies residues 109-185 (IREPEQNRNP…GENSDGCIIM (77 aa)). The residue at position 182 (Cys-182) is a Cysteine methyl ester. The S-farnesyl cysteine moiety is linked to residue Cys-182. Positions 183 to 185 (IIM) are cleaved as a propeptide — removed in mature form.

Belongs to the HIPP family.

In terms of biological role, probable heavy-metal-binding protein. This Arabidopsis thaliana (Mouse-ear cress) protein is Heavy metal-associated isoprenylated plant protein 11.